The chain runs to 1415 residues: DNA-directed RNA polymerase subunit beta' (1415 aa).

Residues C72, C74, C87, and C90 each coordinate Zn(2+). Residues D463, D465, and D467 each contribute to the Mg(2+) site. 4 residues coordinate Zn(2+): C811, C885, C892, and C895.

Belongs to the RNA polymerase beta' chain family. The RNAP catalytic core consists of 2 alpha, 1 beta, 1 beta' and 1 omega subunit. When a sigma factor is associated with the core the holoenzyme is formed, which can initiate transcription. Requires Mg(2+) as cofactor. It depends on Zn(2+) as a cofactor.

It catalyses the reaction RNA(n) + a ribonucleoside 5'-triphosphate = RNA(n+1) + diphosphate. DNA-dependent RNA polymerase catalyzes the transcription of DNA into RNA using the four ribonucleoside triphosphates as substrates. In Cereibacter sphaeroides (strain ATCC 17025 / ATH 2.4.3) (Rhodobacter sphaeroides), this protein is DNA-directed RNA polymerase subunit beta'.